We begin with the raw amino-acid sequence, 137 residues long: Nucleoside diphosphate kinase (137 aa).

Positions 9, 57, 85, 91, 102, and 112 each coordinate ATP. Histidine 115 (pros-phosphohistidine intermediate) is an active-site residue.

It belongs to the NDK family. As to quaternary structure, homotetramer. The cofactor is Mg(2+).

The protein resides in the cytoplasm. The enzyme catalyses a 2'-deoxyribonucleoside 5'-diphosphate + ATP = a 2'-deoxyribonucleoside 5'-triphosphate + ADP. It catalyses the reaction a ribonucleoside 5'-diphosphate + ATP = a ribonucleoside 5'-triphosphate + ADP. Functionally, major role in the synthesis of nucleoside triphosphates other than ATP. The ATP gamma phosphate is transferred to the NDP beta phosphate via a ping-pong mechanism, using a phosphorylated active-site intermediate. This chain is Nucleoside diphosphate kinase, found in Aliarcobacter butzleri (strain RM4018) (Arcobacter butzleri).